Reading from the N-terminus, the 225-residue chain is 3-demethoxyubiquinol 3-hydroxylase (225 aa).

Over residues 1–11 (MSVASTSSGFT) the composition is skewed to polar residues. The tract at residues 1–20 (MSVASTSSGFTPFSRRRGPL) is disordered. Residues Glu-74, Glu-104, His-107, Glu-156, Glu-188, and His-191 each contribute to the Fe cation site. The segment at 181–203 (VSQMKDDEAQHRASAERAGGVPL) is disordered. A compositionally biased stretch (basic and acidic residues) spans 184-195 (MKDDEAQHRASA).

The protein belongs to the COQ7 family. It depends on Fe cation as a cofactor.

It is found in the cell membrane. It catalyses the reaction a 5-methoxy-2-methyl-3-(all-trans-polyprenyl)benzene-1,4-diol + AH2 + O2 = a 3-demethylubiquinol + A + H2O. It functions in the pathway cofactor biosynthesis; ubiquinone biosynthesis. In terms of biological role, catalyzes the hydroxylation of 2-nonaprenyl-3-methyl-6-methoxy-1,4-benzoquinol during ubiquinone biosynthesis. This chain is 3-demethoxyubiquinol 3-hydroxylase, found in Bordetella petrii (strain ATCC BAA-461 / DSM 12804 / CCUG 43448).